Consider the following 212-residue polypeptide: MICGVDEAGKGSVLGPMVVAAVGCTDMDDLIALGVADSKKLSSKSREKISADIKAQFPFSIVIRTAHDIDELRRTMTMNEIVARSHAEALIPLNCTCAYVDACDVSEERYEETVSSFSPPDCTIVARHKADSLFPPVSAASIIAKVERDRIIEELSKEYGDIGSGYPSDPVTITYLTKYIRHHNQPPVIARSSWETVKNLLHQKNQSSLLDF.

The region spanning 1-206 is the RNase H type-2 domain; sequence MICGVDEAGK…VKNLLHQKNQ (206 aa). Residues Asp6, Glu7, and Asp101 each coordinate a divalent metal cation.

This sequence belongs to the RNase HII family. Requires Mn(2+) as cofactor. The cofactor is Mg(2+).

The protein resides in the cytoplasm. The enzyme catalyses Endonucleolytic cleavage to 5'-phosphomonoester.. Functionally, endonuclease that specifically degrades the RNA of RNA-DNA hybrids. The sequence is that of Ribonuclease HII from Methanospirillum hungatei JF-1 (strain ATCC 27890 / DSM 864 / NBRC 100397 / JF-1).